Reading from the N-terminus, the 591-residue chain is Aspartate--tRNA(Asp/Asn) ligase (591 aa).

Position 175 (Glu-175) interacts with L-aspartate. Residues 199–202 (QQFK) form an aspartate region. Positions 221 and 453 each coordinate L-aspartate. 221–223 (RDE) contacts ATP. Glu-486 contributes to the ATP binding site. Residue Arg-493 participates in L-aspartate binding. 538–541 (GIDR) contributes to the ATP binding site.

This sequence belongs to the class-II aminoacyl-tRNA synthetase family. Type 1 subfamily. In terms of assembly, homodimer.

It localises to the cytoplasm. It carries out the reaction tRNA(Asx) + L-aspartate + ATP = L-aspartyl-tRNA(Asx) + AMP + diphosphate. Functionally, aspartyl-tRNA synthetase with relaxed tRNA specificity since it is able to aspartylate not only its cognate tRNA(Asp) but also tRNA(Asn). Reaction proceeds in two steps: L-aspartate is first activated by ATP to form Asp-AMP and then transferred to the acceptor end of tRNA(Asp/Asn). This chain is Aspartate--tRNA(Asp/Asn) ligase, found in Cereibacter sphaeroides (strain ATCC 17029 / ATH 2.4.9) (Rhodobacter sphaeroides).